The following is a 162-amino-acid chain: 2-C-methyl-D-erythritol 2,4-cyclodiphosphate synthase (162 aa).

A divalent metal cation contacts are provided by Asp-12 and His-14. 4-CDP-2-C-methyl-D-erythritol 2-phosphate contacts are provided by residues 12-14 (DVH) and 38-39 (HS). Residue His-46 coordinates a divalent metal cation. 4-CDP-2-C-methyl-D-erythritol 2-phosphate is bound by residues 60–62 (DIG), 65–69 (FPDTD), and Arg-146.

The protein belongs to the IspF family. As to quaternary structure, homotrimer. It depends on a divalent metal cation as a cofactor.

The enzyme catalyses 4-CDP-2-C-methyl-D-erythritol 2-phosphate = 2-C-methyl-D-erythritol 2,4-cyclic diphosphate + CMP. The protein operates within isoprenoid biosynthesis; isopentenyl diphosphate biosynthesis via DXP pathway; isopentenyl diphosphate from 1-deoxy-D-xylulose 5-phosphate: step 4/6. Involved in the biosynthesis of isopentenyl diphosphate (IPP) and dimethylallyl diphosphate (DMAPP), two major building blocks of isoprenoid compounds. Catalyzes the conversion of 4-diphosphocytidyl-2-C-methyl-D-erythritol 2-phosphate (CDP-ME2P) to 2-C-methyl-D-erythritol 2,4-cyclodiphosphate (ME-CPP) with a corresponding release of cytidine 5-monophosphate (CMP). The sequence is that of 2-C-methyl-D-erythritol 2,4-cyclodiphosphate synthase from Bordetella parapertussis (strain 12822 / ATCC BAA-587 / NCTC 13253).